The chain runs to 290 residues: Bifunctional protein FolD (290 aa).

NADP(+) contacts are provided by residues 169–171, isoleucine 194, and isoleucine 235; that span reads GAS.

This sequence belongs to the tetrahydrofolate dehydrogenase/cyclohydrolase family. Homodimer.

The enzyme catalyses (6R)-5,10-methylene-5,6,7,8-tetrahydrofolate + NADP(+) = (6R)-5,10-methenyltetrahydrofolate + NADPH. It carries out the reaction (6R)-5,10-methenyltetrahydrofolate + H2O = (6R)-10-formyltetrahydrofolate + H(+). The protein operates within one-carbon metabolism; tetrahydrofolate interconversion. Catalyzes the oxidation of 5,10-methylenetetrahydrofolate to 5,10-methenyltetrahydrofolate and then the hydrolysis of 5,10-methenyltetrahydrofolate to 10-formyltetrahydrofolate. In Helicobacter pylori (strain HPAG1), this protein is Bifunctional protein FolD.